A 249-amino-acid chain; its full sequence is Proteasome subunit alpha type-3 (249 aa).

Belongs to the peptidase T1A family. As to quaternary structure, the 26S proteasome consists of a 20S proteasome core and two 19S regulatory subunits. The 20S proteasome core is composed of 28 subunits that are arranged in four stacked rings, resulting in a barrel-shaped structure. The two end rings are each formed by seven alpha subunits, and the two central rings are each formed by seven beta subunits. The catalytic chamber with the active sites is on the inside of the barrel.

It is found in the cytoplasm. It localises to the nucleus. The proteasome is a multicatalytic proteinase complex which is characterized by its ability to cleave peptides with Arg, Phe, Tyr, Leu, and Glu adjacent to the leaving group at neutral or slightly basic pH. The proteasome has an ATP-dependent proteolytic activity. The polypeptide is Proteasome subunit alpha type-3 (PAG1) (Spinacia oleracea (Spinach)).